Here is a 130-residue protein sequence, read N- to C-terminus: Small ribosomal subunit protein uS9 (130 aa).

The segment at 109–130 (RMKERKKYGLKKARRAPQFSKR) is disordered. Residues 111 to 130 (KERKKYGLKKARRAPQFSKR) are compositionally biased toward basic residues.

It belongs to the universal ribosomal protein uS9 family.

In Clostridium kluyveri (strain NBRC 12016), this protein is Small ribosomal subunit protein uS9.